Consider the following 238-residue polypeptide: Probable RNA/DNA demethylase ALKBH6 (238 aa).

The Fe2OG dioxygenase domain maps to 96–227 (PANHVLVNQY…RVSLTIRRVP (132 aa)). Residues Asn-103 and Tyr-105 each coordinate 2-oxoglutarate. 2 residues coordinate Fe cation: His-114 and Asp-116. Residues 138–161 (YEPRRPEDDDPTEQPRPPPRPTTS) form a disordered region. Fe cation is bound at residue His-182. Residues Arg-218 and Ser-220 each coordinate 2-oxoglutarate.

The protein belongs to the alkB family. In terms of assembly, interacts with VCPKMT. Requires Fe(2+) as cofactor. Widely expressed, with highest expression in testis and pancreas.

It localises to the cytoplasm. It is found in the nucleus. In terms of biological role, probable Fe(2+)/2-oxoglutarate-dependent dioxygenase involved in oxidative demethylation of nucleic acids. Binds nucleic acids with a preference for ssDNA or ssRNA to other types of DNAs. May play a role in nucleic acid damage repair. The chain is Probable RNA/DNA demethylase ALKBH6 from Homo sapiens (Human).